The sequence spans 290 residues: Acetyl-coenzyme A carboxylase carboxyl transferase subunit beta (290 aa).

Residues 27-290 (LWVKCPSCEA…LQRQPADALA (264 aa)) enclose the CoA carboxyltransferase N-terminal domain. Zn(2+) is bound by residues Cys31, Cys34, Cys50, and Cys53. The C4-type zinc-finger motif lies at 31-53 (CPSCEAVLYRNDVDANLHVCPKC).

Belongs to the AccD/PCCB family. In terms of assembly, acetyl-CoA carboxylase is a heterohexamer composed of biotin carboxyl carrier protein (AccB), biotin carboxylase (AccC) and two subunits each of ACCase subunit alpha (AccA) and ACCase subunit beta (AccD). Requires Zn(2+) as cofactor.

The protein resides in the cytoplasm. The enzyme catalyses N(6)-carboxybiotinyl-L-lysyl-[protein] + acetyl-CoA = N(6)-biotinyl-L-lysyl-[protein] + malonyl-CoA. It functions in the pathway lipid metabolism; malonyl-CoA biosynthesis; malonyl-CoA from acetyl-CoA: step 1/1. Component of the acetyl coenzyme A carboxylase (ACC) complex. Biotin carboxylase (BC) catalyzes the carboxylation of biotin on its carrier protein (BCCP) and then the CO(2) group is transferred by the transcarboxylase to acetyl-CoA to form malonyl-CoA. The sequence is that of Acetyl-coenzyme A carboxylase carboxyl transferase subunit beta from Burkholderia multivorans (strain ATCC 17616 / 249).